A 349-amino-acid polypeptide reads, in one-letter code: N-acetyl-gamma-glutamyl-phosphate reductase (349 aa).

The active site involves Cys-149.

This sequence belongs to the NAGSA dehydrogenase family. Type 1 subfamily.

It is found in the cytoplasm. The enzyme catalyses N-acetyl-L-glutamate 5-semialdehyde + phosphate + NADP(+) = N-acetyl-L-glutamyl 5-phosphate + NADPH + H(+). It functions in the pathway amino-acid biosynthesis; L-arginine biosynthesis; N(2)-acetyl-L-ornithine from L-glutamate: step 3/4. In terms of biological role, catalyzes the NADPH-dependent reduction of N-acetyl-5-glutamyl phosphate to yield N-acetyl-L-glutamate 5-semialdehyde. This is N-acetyl-gamma-glutamyl-phosphate reductase from Acinetobacter baylyi (strain ATCC 33305 / BD413 / ADP1).